The sequence spans 632 residues: Biosynthetic arginine decarboxylase (632 aa).

N6-(pyridoxal phosphate)lysine is present on K101. Substrate is bound at residue 281-291 (FDVGGGLGVDY).

The protein belongs to the Orn/Lys/Arg decarboxylase class-II family. SpeA subfamily. The cofactor is Mg(2+). Pyridoxal 5'-phosphate is required as a cofactor.

The enzyme catalyses L-arginine + H(+) = agmatine + CO2. It participates in amine and polyamine biosynthesis; agmatine biosynthesis; agmatine from L-arginine: step 1/1. In terms of biological role, catalyzes the biosynthesis of agmatine from arginine. The protein is Biosynthetic arginine decarboxylase of Klebsiella pneumoniae (strain 342).